We begin with the raw amino-acid sequence, 162 residues long: Caveolin-2 (162 aa).

Topologically, residues 1 to 86 (MGLETEKADV…FEVSKYVIYK (86 aa)) are cytoplasmic. A Phosphotyrosine; by SRC modification is found at Y19. Phosphoserine occurs at positions 20 and 23. At Y27 the chain carries Phosphotyrosine; by SRC. Positions 87-107 (FLTLFLAIPLAFAAGILFATL) form an intramembrane region, helical. Residues 108–162 (SCLHIWIVMPFVKTCLMVLPSVQTIWKSVTDVVIAPLCASVGRSFSSVSMQLSRD) are Cytoplasmic-facing.

The protein belongs to the caveolin family. Monomer or homodimer. Interacts with CAV1; the interaction forms a stable heterooligomeric complex that is required for targeting to lipid rafts and for caveolae formation. Tyrosine phosphorylated forms do not form heterooligomers with the Tyr-19-phosphorylated form existing as a monomer or dimer, and the Tyr-27-form as a monomer only. Interacts (tyrosine phosphorylated form) with the SH2 domain-containing proteins, RASA1, NCK1 and SRC. Interacts (tyrosine phosphorylated form) with INSR, the interaction (Tyr-27-phosphorylated form) is increased on insulin stimulation. Interacts (Tyr-19 phosphorylated form) with MAPK1 (phosphorylated form); the interaction, promoted by insulin, leads to nuclear location and MAPK1 activation. Interacts with STAT3; the interaction is increased on insulin-induced tyrosine phosphorylation leading to STAT activation. Post-translationally, phosphorylated on serine and tyrosine residues. CAV1 promotes phosphorylation on Ser-23 which then targets the complex to the plasma membrane, lipid rafts and caveolae. Phosphorylation on both Tyr-19 and Tyr-27 is required for insulin-induced 'Ser-727' phosphorylation of STAT3 and its activation. Phosphorylation on Tyr-19 is required for insulin-induced phosphorylation of MAPK1 and DNA binding of STAT3. Tyrosine phosphorylation is induced by both EGF and insulin.

It localises to the nucleus. Its subcellular location is the cytoplasm. The protein resides in the golgi apparatus membrane. It is found in the cell membrane. The protein localises to the membrane. It localises to the caveola. Functionally, may act as a scaffolding protein within caveolar membranes. Interacts directly with G-protein alpha subunits and can functionally regulate their activity. Acts as an accessory protein in conjunction with CAV1 in targeting to lipid rafts and driving caveolae formation. Positive regulator of cellular mitogenesis of the MAPK signaling pathway. Required for the insulin-stimulated nuclear translocation and activation of MAPK1 and STAT3, and the subsequent regulation of cell cycle progression. The chain is Caveolin-2 (CAV2) from Rhinolophus ferrumequinum (Greater horseshoe bat).